The following is a 711-amino-acid chain: Putative membrane protein ActII-3 (711 aa).

The next 12 helical transmembrane spans lie at 14–34, 175–195, 199–219, 235–255, 281–301, 313–333, 369–389, 516–536, 540–560, 573–593, 623–643, and 645–665; these read LKWL…PLAG, ADFK…VVTY, LLWL…QAIV, AMIL…LLVA, AIVA…LAAL, VGVL…LVIF, AVWV…VTLN, IIPV…RALV, LLIA…ALFF, FPLW…IFLV, AGLV…VFIA, and LGFT…SVLV. Positions 685-711 are disordered; that stretch reads REDPSEDPAVSGMPDSIDSEASTTASR.

It belongs to the resistance-nodulation-cell division (RND) (TC 2.A.6) family. MmpL subfamily.

It is found in the cell membrane. The sequence is that of Putative membrane protein ActII-3 (actII-3) from Streptomyces coelicolor (strain ATCC BAA-471 / A3(2) / M145).